Here is a 363-residue protein sequence, read N- to C-terminus: Protein RecA (363 aa).

Residue 77–84 (GPESSGKT) coordinates ATP.

The protein belongs to the RecA family.

It localises to the cytoplasm. In terms of biological role, can catalyze the hydrolysis of ATP in the presence of single-stranded DNA, the ATP-dependent uptake of single-stranded DNA by duplex DNA, and the ATP-dependent hybridization of homologous single-stranded DNAs. It interacts with LexA causing its activation and leading to its autocatalytic cleavage. The protein is Protein RecA of Agrobacterium fabrum (strain C58 / ATCC 33970) (Agrobacterium tumefaciens (strain C58)).